The sequence spans 93 residues: Small ribosomal subunit protein uS19 (93 aa).

It belongs to the universal ribosomal protein uS19 family.

Protein S19 forms a complex with S13 that binds strongly to the 16S ribosomal RNA. The sequence is that of Small ribosomal subunit protein uS19 from Cutibacterium acnes (strain DSM 16379 / KPA171202) (Propionibacterium acnes).